Here is a 201-residue protein sequence, read N- to C-terminus: MICOS complex subunit MIC27 (201 aa).

The N-terminal 31 residues, methionine 1–serine 31, are a transit peptide targeting the mitochondrion. Residues lysine 32 to tryptophan 117 are Cytoplasmic-facing. Residues threonine 118–leucine 138 form a helical membrane-spanning segment. At lysine 139–arginine 145 the chain is on the mitochondrial intermembrane side. The chain crosses the membrane as a helical span at residues leucine 146 to valine 166. Residues aspartate 167–lysine 201 are Cytoplasmic-facing.

Belongs to the apolipoprotein O/MICOS complex subunit Mic27 family. As to quaternary structure, component of the mitochondrial contact site and cristae organizing system (MICOS) complex.

The protein resides in the mitochondrion outer membrane. Functionally, sustains mitochondrial morphology probably through maintaining cristae morphology. May act as a component of the MICOS complex, a large protein complex of the mitochondria. The sequence is that of MICOS complex subunit MIC27 from Caenorhabditis elegans.